We begin with the raw amino-acid sequence, 378 residues long: MNHSDTLSLSLELLQQPSVTPIDHTCQTIIAERLAKVGFHIEPMRFGDVDNLWARRGTEGPVFCFAGHTDVVPTGRLDAWNSDPFAPEIRDGKLYGRGSADMKTALAAMVVASERFIAKHPNHKGSIAFLITSDEEGPAVNGTVKVIETLEKRNEKITWCLVGEPSSTHKLGDIVKNGRRGSLNAVLKVQGKQGHVAYPHLARNPIHEASPALAELCQTVWDNGNEYFPATSFQISNIHAGTGATNVIPGALEVTFNFRYSTEVTAEQLKQRVHEILDKHGLQYEIVWNLSGLPFLTPVGELVNAAQTAILNVTGTETELSTSGGTSDGRFIAPTGAQVLELGVLNATIHQINEHVDVHDLDPLTDIYEQILENLLAQ.

A Zn(2+)-binding site is contributed by His-68. Residue Asp-70 is part of the active site. Asp-101 provides a ligand contact to Zn(2+). The active-site Proton acceptor is the Glu-135. Zn(2+) contacts are provided by Glu-136, Glu-164, and His-350.

The protein belongs to the peptidase M20A family. DapE subfamily. In terms of assembly, homodimer. Zn(2+) serves as cofactor. Co(2+) is required as a cofactor.

The enzyme catalyses N-succinyl-(2S,6S)-2,6-diaminopimelate + H2O = (2S,6S)-2,6-diaminopimelate + succinate. The protein operates within amino-acid biosynthesis; L-lysine biosynthesis via DAP pathway; LL-2,6-diaminopimelate from (S)-tetrahydrodipicolinate (succinylase route): step 3/3. Its function is as follows. Catalyzes the hydrolysis of N-succinyl-L,L-diaminopimelic acid (SDAP), forming succinate and LL-2,6-diaminopimelate (DAP), an intermediate involved in the bacterial biosynthesis of lysine and meso-diaminopimelic acid, an essential component of bacterial cell walls. In Acinetobacter baumannii (strain ACICU), this protein is Succinyl-diaminopimelate desuccinylase.